Consider the following 361-residue polypeptide: 3-dehydroquinate synthase (361 aa).

Residues 71 to 76, 105 to 109, 129 to 130, Lys-142, Lys-151, and 169 to 172 contribute to the NAD(+) site; these read DGEQFK, GVIGD, TT, and CLQT. 3 residues coordinate Zn(2+): Glu-184, His-247, and His-264.

This sequence belongs to the sugar phosphate cyclases superfamily. Dehydroquinate synthase family. It depends on Co(2+) as a cofactor. Zn(2+) serves as cofactor. Requires NAD(+) as cofactor.

The protein resides in the cytoplasm. The enzyme catalyses 7-phospho-2-dehydro-3-deoxy-D-arabino-heptonate = 3-dehydroquinate + phosphate. The protein operates within metabolic intermediate biosynthesis; chorismate biosynthesis; chorismate from D-erythrose 4-phosphate and phosphoenolpyruvate: step 2/7. Functionally, catalyzes the conversion of 3-deoxy-D-arabino-heptulosonate 7-phosphate (DAHP) to dehydroquinate (DHQ). This Edwardsiella ictaluri (strain 93-146) protein is 3-dehydroquinate synthase.